A 455-amino-acid polypeptide reads, in one-letter code: Probable glycine dehydrogenase (decarboxylating) subunit 1 (455 aa).

The protein belongs to the GcvP family. N-terminal subunit subfamily. The glycine cleavage system is composed of four proteins: P, T, L and H. In this organism, the P 'protein' is a heterodimer of two subunits.

It carries out the reaction N(6)-[(R)-lipoyl]-L-lysyl-[glycine-cleavage complex H protein] + glycine + H(+) = N(6)-[(R)-S(8)-aminomethyldihydrolipoyl]-L-lysyl-[glycine-cleavage complex H protein] + CO2. In terms of biological role, the glycine cleavage system catalyzes the degradation of glycine. The P protein binds the alpha-amino group of glycine through its pyridoxal phosphate cofactor; CO(2) is released and the remaining methylamine moiety is then transferred to the lipoamide cofactor of the H protein. The sequence is that of Probable glycine dehydrogenase (decarboxylating) subunit 1 from Francisella tularensis subsp. holarctica (strain LVS).